Here is a 438-residue protein sequence, read N- to C-terminus: Coenzyme A disulfide reductase (438 aa).

8 to 33 (GAVAGGATCASQIRRLDKESDIIIFE) serves as a coordination point for FAD. 5 residues coordinate substrate: threonine 15, glutamine 19, arginine 22, serine 39, and asparagine 42. Cysteine 43 serves as the catalytic Nucleophile. Cysteine 43 serves as the catalytic Redox-active. Lysine 71 lines the substrate pocket. 151 to 166 (VLVVGAGYVSLEVLEN) provides a ligand contact to NADP(+). 267 to 277 (TNVPNIYAIGD) is a binding site for FAD. Histidine 299 is a binding site for substrate. An FAD-binding site is contributed by tyrosine 419. Lysine 427 is a binding site for substrate.

This sequence belongs to the class-III pyridine nucleotide-disulfide oxidoreductase family. As to quaternary structure, homodimer. It depends on FAD as a cofactor.

The catalysed reaction is NADP(+) + 2 CoA = CoA-disulfide + NADPH + H(+). Functionally, catalyzes specifically the NADPH-dependent reduction of coenzyme A disulfide. This is Coenzyme A disulfide reductase from Staphylococcus aureus (strain COL).